A 440-amino-acid chain; its full sequence is Chromosomal replication initiator protein DnaA (440 aa).

The domain I, interacts with DnaA modulators stretch occupies residues 1 to 72; sequence MTELDSLWEA…KEFAQRELGR (72 aa). The domain II stretch occupies residues 72–103; the sequence is RNIEPHYVLEGEFTYTNKKTEDDPTPSFEMDT. The segment at 104 to 320 is domain III, AAA+ region; sequence PLNPHYNFGT…GALTKVQAFA (217 aa). ATP-binding residues include Gly-148, Gly-150, Lys-151, and Thr-152. The tract at residues 321–440 is domain IV, binds dsDNA; it reads NLSGERITPS…ITKLKAKLRS (120 aa).

The protein belongs to the DnaA family. In terms of assembly, oligomerizes as a right-handed, spiral filament on DNA at oriC.

The protein resides in the cytoplasm. In terms of biological role, plays an essential role in the initiation and regulation of chromosomal replication. ATP-DnaA binds to the origin of replication (oriC) to initiate formation of the DNA replication initiation complex once per cell cycle. Binds the DnaA box (a 9 base pair repeat at the origin) and separates the double-stranded (ds)DNA. Forms a right-handed helical filament on oriC DNA; dsDNA binds to the exterior of the filament while single-stranded (ss)DNA is stabiized in the filament's interior. The ATP-DnaA-oriC complex binds and stabilizes one strand of the AT-rich DNA unwinding element (DUE), permitting loading of DNA polymerase. After initiation quickly degrades to an ADP-DnaA complex that is not apt for DNA replication. Binds acidic phospholipids. The polypeptide is Chromosomal replication initiator protein DnaA (Limosilactobacillus reuteri (strain DSM 20016) (Lactobacillus reuteri)).